Reading from the N-terminus, the 201-residue chain is L(+)-tartrate dehydratase subunit beta (201 aa).

Histidine 37 is an active-site residue.

The protein belongs to the class-I fumarase family. Heterotetramer of two alpha and two beta subunits.

It catalyses the reaction (2R,3R)-tartrate = oxaloacetate + H2O. This chain is L(+)-tartrate dehydratase subunit beta (ttdB), found in Escherichia coli O6:K15:H31 (strain 536 / UPEC).